A 122-amino-acid polypeptide reads, in one-letter code: Large ribosomal subunit protein uL18 (122 aa).

This sequence belongs to the universal ribosomal protein uL18 family. As to quaternary structure, part of the 50S ribosomal subunit; part of the 5S rRNA/L5/L18/L25 subcomplex. Contacts the 5S and 23S rRNAs.

This is one of the proteins that bind and probably mediate the attachment of the 5S RNA into the large ribosomal subunit, where it forms part of the central protuberance. The sequence is that of Large ribosomal subunit protein uL18 from Hydrogenobaculum sp. (strain Y04AAS1).